The sequence spans 567 residues: MPKVEIYKNLFLDKVGKNFTNSEISELLEPFKAEFDGFDENSGKIKIEFNDTNRPDLWSYTGLARQIKTYFFGKIPCYDFFSKKGDFKKCYGEILVDNKMSQIRPFIFGFLAKGLIINDRMLEALIQFQEKLCQSYGQKRKRVAMGMYNSNFIKFPISYVASSPNHKFVPLGMDCELSLLEINEKHPKGLEYSHIIKNFDKYPLLLDDNNNVVSYPPIINSNNIGSLKVGDTDIFVEVTGIDFEATLLALSVVACDFYDMGFEILPVKTVFKKPFGLDFEELVCPYYFQEEVEFNVKNVNRLLGSNLTLERICLSLKKMGVNSYSRDLKNYVIPPFYRNDFLHEVDVIEDVMIGEGLASFHPELPKAFAVGRLSALEEFSRDIRNLMVGMGFQEMIYNYMGSKKDFIDRMNISDQNFLKVSNPMTENYEYIRASIIPNLLKSESVSSNFPYPHKIFEVGKIALKNLNTTIEGTNTFTNLAFLMSGKEISFNEINSIVATLFYYLNIEINLKESQANFYINGRGADIFLKDFNIGSFGEISPYVLNNFGIFIPCSVFEVNINKLMSRS.

One can recognise a B5 domain in the interval 287-362 (YFQEEVEFNV…IGEGLASFHP (76 aa)). Mg(2+) contacts are provided by Asp340, Asp346, Glu349, and Asp350.

The protein belongs to the phenylalanyl-tRNA synthetase beta subunit family. Type 2 subfamily. Tetramer of two alpha and two beta subunits. Mg(2+) serves as cofactor.

The protein resides in the cytoplasm. The enzyme catalyses tRNA(Phe) + L-phenylalanine + ATP = L-phenylalanyl-tRNA(Phe) + AMP + diphosphate + H(+). This is Phenylalanine--tRNA ligase beta subunit from Borreliella afzelii (strain PKo) (Borrelia afzelii).